The following is a 234-amino-acid chain: Thymidylate kinase (234 aa).

21–28 (GGEGTGKS) provides a ligand contact to ATP.

This sequence belongs to the thymidylate kinase family.

The catalysed reaction is dTMP + ATP = dTDP + ADP. Its function is as follows. Phosphorylation of dTMP to form dTDP in both de novo and salvage pathways of dTTP synthesis. This chain is Thymidylate kinase, found in Rhizobium meliloti (strain 1021) (Ensifer meliloti).